A 223-amino-acid polypeptide reads, in one-letter code: N-terminal Xaa-Pro-Lys N-methyltransferase 1 (223 aa).

Met1 bears the N-acetylmethionine mark. Thr2 is subject to N-acetylthreonine; in N-terminal Xaa-Pro-Lys N-methyltransferase 1, N-terminally processed. S-adenosyl-L-methionine contacts are provided by residues Gly69, Arg74, 91–93 (DVT), 119–120 (LQ), and Gln135.

This sequence belongs to the methyltransferase superfamily. NTM1 family.

Its subcellular location is the nucleus. The enzyme catalyses N-terminal L-alanyl-L-prolyl-L-lysyl-[protein] + 3 S-adenosyl-L-methionine = N-terminal N,N,N-trimethyl-L-alanyl-L-prolyl-L-lysyl-[protein] + 3 S-adenosyl-L-homocysteine + 3 H(+). It carries out the reaction N-terminal L-seryl-L-prolyl-L-lysyl-[protein] + 3 S-adenosyl-L-methionine = N-terminal N,N,N-trimethyl-L-seryl-L-prolyl-L-lysyl-[protein] + 3 S-adenosyl-L-homocysteine + 3 H(+). The catalysed reaction is N-terminal L-prolyl-L-prolyl-L-lysyl-[protein] + 2 S-adenosyl-L-methionine = N-terminal N,N-dimethyl-L-prolyl-L-prolyl-L-lysyl-[protein] + 2 S-adenosyl-L-homocysteine + 2 H(+). In terms of biological role, distributive alpha-N-methyltransferase that methylates the N-terminus of target proteins containing the N-terminal motif [Ala/Gly/Pro/Ser]-Pro-Lys when the initiator Met is cleaved. Specifically catalyzes mono-, di- or tri-methylation of the exposed alpha-amino group of the Ala, Gly or Ser residue in the [Ala/Gly/Ser]-Pro-Lys motif and mono- or di-methylation of Pro in the Pro-Pro-Lys motif. Some of the substrates may be primed by NTMT2-mediated monomethylation. Catalyzes the trimethylation of the N-terminal Gly in CENPA (after removal of Met-1). Responsible for the N-terminal methylation of KLHL31, MYL2, MYL3, RB1, RCC1, RPL23A and SET. Required during mitosis for normal bipolar spindle formation and chromosome segregation via its action on RCC1. The chain is N-terminal Xaa-Pro-Lys N-methyltransferase 1 (Ntmt1) from Mus musculus (Mouse).